A 431-amino-acid chain; its full sequence is Protein cereblon (431 aa).

The disordered stretch occupies residues 1 to 36 (MGNQLQLLPENEEEEEDDMETEDRDGEDVEKPSIIN). Residues 10 to 28 (ENEEEEEDDMETEDRDGED) show a composition bias toward acidic residues. The region spanning 69–309 (LPVLPHVALI…CELDIMDRCT (241 aa)) is the Lon N-terminal domain. Positions 308 to 416 (CTSLCCKQCQ…LTRSALLPTI (109 aa)) constitute a CULT domain. The Zn(2+) site is built by Cys313 and Cys316. Positions 368, 370, and 376 each coordinate (S)-thalidomide. Zn(2+)-binding residues include Cys381 and Cys384.

Belongs to the CRBN family. Component of a DCX (DDB1-CUL4-X-box) protein ligase complex. As to expression, highly expressed in brain, head, vasculature otic vesicles and developing pectoral fins.

It localises to the cytoplasm. It is found in the nucleus. The protein operates within protein modification; protein ubiquitination. Substrate recognition component of a DCX (DDB1-CUL4-X-box) E3 protein ligase complex that mediates the ubiquitination and subsequent proteasomal degradation of target proteins, such as MEIS2. Normal degradation of key regulatory proteins is required for normal limb outgrowth and expression of the fibroblast growth factor FGF8. Maintains presynaptic glutamate release and consequently cognitive functions, such as memory and learning, by negatively regulating large-conductance calcium-activated potassium (BK) channels in excitatory neurons. Likely to function by regulating the assembly and neuronal surface expression of BK channels via its interaction with KCNT1. May also be involved in regulating anxiety-like behaviors via a BK channel-independent mechanism. The polypeptide is Protein cereblon (crbn) (Danio rerio (Zebrafish)).